Consider the following 208-residue polypeptide: Interleukin-6 (208 aa).

Positions 1–20 (MNSLSTIAFSLGLLLVTATA) are cleaved as a signal peptide. The cysteines at positions 67 and 73 are disulfide-linked. The residue at position 76 (Ser-76) is a Phosphoserine. Cysteines 96 and 106 form a disulfide. N-linked (GlcNAc...) asparagine glycosylation is present at Asn-167.

Belongs to the IL-6 superfamily. In terms of assembly, component of a hexamer of two molecules each of IL6, IL6R and IL6ST; first binds to IL6R to associate with the signaling subunit IL6ST. Interacts with IL6R (via the N-terminal ectodomain); this interaction may be affected by IL6R-binding with SORL1, hence decreasing IL6 cis signaling. Interacts with SORL1 (via the N-terminal ectodomain); this interaction leads to IL6 internalization and lysosomal degradation. May form a trimeric complex with the soluble SORL1 ectodomain and soluble IL6R receptor; this interaction might stabilize circulating IL6, hence promoting IL6 trans signaling.

It is found in the secreted. Functionally, cytokine with a wide variety of biological functions in immunity, tissue regeneration, and metabolism. Binds to IL6R, then the complex associates to the signaling subunit IL6ST/gp130 to trigger the intracellular IL6-signaling pathway. The interaction with the membrane-bound IL6R and IL6ST stimulates 'classic signaling', whereas the binding of IL6 and soluble IL6R to IL6ST stimulates 'trans-signaling'. Alternatively, 'cluster signaling' occurs when membrane-bound IL6:IL6R complexes on transmitter cells activate IL6ST receptors on neighboring receiver cells. IL6 is a potent inducer of the acute phase response. Rapid production of IL6 contributes to host defense during infection and tissue injury, but excessive IL6 synthesis is involved in disease pathology. In the innate immune response, is synthesized by myeloid cells, such as macrophages and dendritic cells, upon recognition of pathogens through toll-like receptors (TLRs) at the site of infection or tissue injury. In the adaptive immune response, is required for the differentiation of B cells into immunoglobulin-secreting cells. Plays a major role in the differentiation of CD4(+) T cell subsets. Essential factor for the development of T follicular helper (Tfh) cells that are required for the induction of germinal-center formation. Required to drive naive CD4(+) T cells to the Th17 lineage. Also required for proliferation of myeloma cells and the survival of plasmablast cells. In terms of biological role, acts as an essential factor in bone homeostasis and on vessels directly or indirectly by induction of VEGF, resulting in increased angiogenesis activity and vascular permeability. Induces, through 'trans-signaling' and synergistically with IL1B and TNF, the production of VEGF. Involved in metabolic controls, is discharged into the bloodstream after muscle contraction increasing lipolysis and improving insulin resistance. 'Trans-signaling' in central nervous system also regulates energy and glucose homeostasis. Mediates, through GLP-1, crosstalk between insulin-sensitive tissues, intestinal L cells and pancreatic islets to adapt to changes in insulin demand. Also acts as a myokine. Plays a protective role during liver injury, being required for maintenance of tissue regeneration. Also has a pivotal role in iron metabolism by regulating HAMP/hepcidin expression upon inflammation or bacterial infection. Through activation of IL6ST-YAP-NOTCH pathway, induces inflammation-induced epithelial regeneration. The chain is Interleukin-6 (IL6) from Delphinapterus leucas (Beluga whale).